A 1514-amino-acid chain; its full sequence is Polycomb group protein ASXL1 (1514 aa).

Positions 11 to 86 (RTWAEAARLV…RISLFTLKKD (76 aa)) constitute an HTH HARE-type domain. Disordered regions lie at residues 95–170 (ATVD…VMLP) and 183–249 (HVEP…RGEE). Over residues 98–107 (DGDEPEDSAD) the composition is skewed to acidic residues. Over residues 111 to 145 (CGSNEASTVSGENDVSLDETSSNASCSTESQSRPL) the composition is skewed to polar residues. Low complexity predominate over residues 199 to 209 (SGSPSSSSSGS). Positions 243-246 (KRNR) are interaction with nucleosomal DNA forming a DNA clamp with BAP1. Residues 255 to 364 (PGSILVNTNL…FEDYYGQKLG (110 aa)) enclose the DEUBAD domain. An LXXLL motif 1 motif is present at residues 284-288 (LLLLL). Positions 300-655 (LLRLSGSALN…GGGSGAIDEG (356 aa)) are interaction with NCOA1. An NEF motif motif is present at residues 310 to 315 (NEFFTH). The interaction with nucleosomal DNA stretch occupies residues 336-346 (RLRQEMEKEKK). Disordered regions lie at residues 378–543 (EEAK…EDRQ), 635–823 (TTAI…FDNM), 895–914 (SDPE…EKEW), 926–952 (SVPQ…SDSE), and 964–995 (ISEA…VDAS). The Nuclear localization signal signature appears at 408–415 (FKKRSRPD). Residues 458–473 (VNSTPGPDVSSATSGQ) show a composition bias toward polar residues. 2 positions are modified to phosphoserine: serine 498 and serine 500. Basic and acidic residues-rich tracts occupy residues 514 to 525 (QETKDQKRKSFE) and 533 to 543 (PEKKPRLEDRQ). Residues 638–654 (IGGGGGPGGGGSGAIDE) are compositionally biased toward gly residues. Over residues 678–692 (PSTSGESASDLQRTQ) the composition is skewed to polar residues. Composition is skewed to basic and acidic residues over residues 713–728 (ARRE…ESCL) and 779–793 (LLDD…REDQ). Positions 808–812 (LGDLL) match the LXXLL motif 2 motif. The span at 971 to 980 (HSESTDTASD) shows a compositional bias: polar residues. The segment at 1082–1087 (LVMHLL) is required for interaction with RARA. 3 disordered regions span residues 1095 to 1131 (KVLP…ENNR), 1213 to 1234 (EQKE…GQCL), and 1256 to 1338 (SEQT…VSAD). The segment covering 1119-1129 (DRGTLQGTGEN) has biased composition (polar residues). 2 stretches are compositionally biased toward polar residues: residues 1256–1269 (SEQT…QNNA) and 1313–1324 (SKNSVSGGVQTT). The PHD-type; atypical zinc-finger motif lies at 1476–1513 (SLQCACSLKAMIMCQGCGAFCHDDCIGPSKLCVLCLVV).

It belongs to the Asx family. Core component of the polycomb repressive deubiquitinase (PR-DUB) complex, at least composed of BAP1, one of ASXL1, ASXL2 or (probably) ASXL3, and one of MBD5 or MBD6. Distinct combinations of ASXL and MBD proteins may preferentially bind specific histone modification marks. The PR-DUB core associates with a number of accessory proteins, including FOXK1, FOXK2, KDM1B, HCFC1 and OGT; KDM1B specifically associates with ASXL2 PR-DUB complexes. Interacts (via DEUBAD domain) with BAP1 (via ULD domain); the interaction is direct and forms a ubiquitin binding cleft. The interaction with BAP1 is important for maintaining BAP1 stability. Together with BAP1, associates (via DEUBAD domain) with nucleosomes; interacts with nucleosomal DNA and stabilizes the orientation of the nucleosome to line up the PR-DUB complex active site with its H2AK118ub1 substrate. Interacts (via PHD domain) with MBD5 and MBD6 (via MBD domain); the interaction is probably direct and mediates association of MBD proteins with the PR-DUB core. Interacts with RARA, RXRA. Interacts with NCOA1. Interacts with PPARA and PPARG. In terms of processing, ubiquitinated by TRIP12, leading to its subsequent degradation following binding of N(6)-methyladenine methylated DNA (6mA).

It localises to the nucleus. Its function is as follows. Probable Polycomb group (PcG) protein involved in transcriptional regulation mediated by ligand-bound nuclear hormone receptors, such as retinoic acid receptors (RARs) and peroxisome proliferator-activated receptor gamma (PPARG). Acts as a coactivator of RARA and RXRA through association with NCOA1. Acts as a corepressor for PPARG and suppresses its adipocyte differentiation-inducing activity. Non-catalytic component of the PR-DUB complex, a complex that specifically mediates deubiquitination of histone H2A monoubiquitinated at 'Lys-119' (H2AK119ub1). Acts as a sensor of N(6)-methyladenine methylation on DNA (6mA): recognizes and binds 6mA DNA, leading to its ubiquitination and degradation by TRIP12, thereby inactivating the PR-DUB complex and regulating Polycomb silencing. The PR-DUB complex is an epigenetic regulator of gene expression and acts as a transcriptional coactivator, affecting genes involved in development, cell communication, signaling, cell proliferation and cell viability. ASXL1, ASXL2 and ASXL3 function redundantly in the PR-DUB complex. The ASXL proteins are essential for chromatin recruitment and transcriptional activation of associated genes. ASXL1 and ASXL2 are important for BAP1 protein stability. Together with BAP1, negatively regulates epithelial-mesenchymal transition (EMT) of trophoblast stem cells during placental development by regulating genes involved in epithelial cell integrity, cell adhesion and cytoskeletal organization. The protein is Polycomb group protein ASXL1 (Asxl1) of Mus musculus (Mouse).